We begin with the raw amino-acid sequence, 775 residues long: Subtilisin-like protease SBT4.1 (775 aa).

The N-terminal stretch at 1-23 (MAIAFHTFLLQLLLFFFASFAEA) is a signal peptide. An N-linked (GlcNAc...) asparagine glycan is attached at asparagine 24. Positions 24–106 (NDSRKTYLVQ…VSRSRNLKLQ (83 aa)) are cleaved as a propeptide — activation peptide. The Inhibitor I9 domain maps to 29-105 (TYLVQMKVGG…EVSRSRNLKL (77 aa)). Residues 110–606 (SWDFMNLTLK…SGHLNATKVR (497 aa)) form the Peptidase S8 domain. Residues asparagine 115 and asparagine 126 are each glycosylated (N-linked (GlcNAc...) asparagine). Residue aspartate 136 is the Charge relay system of the active site. Residue asparagine 162 is glycosylated (N-linked (GlcNAc...) asparagine). Histidine 196 (charge relay system) is an active-site residue. The region spanning 365–459 (FYPLLNEKAP…FLDEQKKGKL (95 aa)) is the PA domain. Asparagine 437 is a glycosylation site (N-linked (GlcNAc...) asparagine). Serine 551 functions as the Charge relay system in the catalytic mechanism. Asparagine 601 carries an N-linked (GlcNAc...) asparagine glycan.

This sequence belongs to the peptidase S8 family. In terms of processing, the C-terminal propeptide is autocleaved.

It is found in the secreted. This chain is Subtilisin-like protease SBT4.1, found in Arabidopsis thaliana (Mouse-ear cress).